We begin with the raw amino-acid sequence, 716 residues long: Ciliary WD repeat-containing protein ctxp80 (716 aa).

The disordered stretch occupies residues 1–53 (MGCGGSSGASDPSSEKINWNNAEIHDEFKQEQKKAGAKRKAFDKTTGKAVEKE). Polar residues predominate over residues 8 to 21 (GASDPSSEKINWNN). Residues 23–53 (EIHDEFKQEQKKAGAKRKAFDKTTGKAVEKE) are compositionally biased toward basic and acidic residues. WD repeat units lie at residues 167-208 (YHTN…KKGR), 213-254 (KGGR…QVKK), 257-297 (SGPD…FKKK), 305-343 (GKPT…STYD), 345-382 (HGKG…AEKT), 424-462 (HSDG…STAL), 529-568 (DSGE…KLGT), 571-610 (AHNS…QDPS), 639-678 (TDGT…GATP), and 683-715 (GHSE…QWKK).

It belongs to the WD repeat EMAP family.

The protein is Ciliary WD repeat-containing protein ctxp80 of Euplotoides octocarinatus (Freshwater ciliate).